The sequence spans 1031 residues: Beta-galactosidase (1031 aa).

Substrate is bound by residues Asn100 and Asp198. Asp198 provides a ligand contact to Na(+). Positions 412, 414, and 457 each coordinate Mg(2+). Substrate is bound by residues Glu457 and 533-536 (EYAH). Catalysis depends on Glu457, which acts as the Proton donor. Residue Glu533 is the Nucleophile of the active site. Asn593 provides a ligand contact to Mg(2+). The Na(+) site is built by Phe597 and Asn600. 2 residues coordinate substrate: Asn600 and Trp1005.

This sequence belongs to the glycosyl hydrolase 2 family. As to quaternary structure, homotetramer. Mg(2+) is required as a cofactor. The cofactor is Na(+).

The enzyme catalyses Hydrolysis of terminal non-reducing beta-D-galactose residues in beta-D-galactosides.. The protein is Beta-galactosidase of Vibrio vulnificus (strain YJ016).